A 449-amino-acid chain; its full sequence is Phosphoglucosamine mutase (449 aa).

The active-site Phosphoserine intermediate is the Ser-101. The Mg(2+) site is built by Ser-101, Asp-241, Asp-243, and Asp-245. Ser-101 bears the Phosphoserine mark.

This sequence belongs to the phosphohexose mutase family. Mg(2+) serves as cofactor. In terms of processing, activated by phosphorylation.

The catalysed reaction is alpha-D-glucosamine 1-phosphate = D-glucosamine 6-phosphate. Its function is as follows. Catalyzes the conversion of glucosamine-6-phosphate to glucosamine-1-phosphate. The protein is Phosphoglucosamine mutase of Ruminiclostridium cellulolyticum (strain ATCC 35319 / DSM 5812 / JCM 6584 / H10) (Clostridium cellulolyticum).